Reading from the N-terminus, the 88-residue chain is Small ribosomal subunit protein bS16c (88 aa).

The protein belongs to the bacterial ribosomal protein bS16 family.

It localises to the plastid. The protein resides in the chloroplast. The sequence is that of Small ribosomal subunit protein bS16c from Helianthus annuus (Common sunflower).